A 323-amino-acid chain; its full sequence is Leucine-rich repeat-containing protein 46 (323 aa).

4 LRR repeats span residues 49-70, 71-92, 93-114, and 115-135; these read DLETVRLDGEGITCIGNLERLR, NIHSLYLQSNKIQRIENLACIT, SLRFLSLAGNQIRHVENLLDLQ, and YLQFLDLSENLIETLKLDELP. The LRRCT domain occupies 146 to 188; the sequence is NPCTNQDGYRKMVIGALPLLLDLDKQPILERWTSDEEDKSSDE. At Thr-178 the chain carries Phosphothreonine. 3 positions are modified to phosphoserine: Ser-179, Ser-185, and Ser-186. Positions 203 to 228 form a coiled coil; it reads RGFFKDLEQELHQHQERRQQAALTEH. The tract at residues 252 to 323 is disordered; sequence DCSPAVTEEP…TKSTNKRGTK (72 aa). The span at 269-290 shows a compositional bias: polar residues; the sequence is ATSSTQMASSSKKQVPRNQKGS. Over residues 297–310 the composition is skewed to low complexity; it reads ALAATASKTSLAAA. Residue Ser-303 is modified to Phosphoserine.

It localises to the cell projection. The protein resides in the cilium. The protein localises to the flagellum. Required for normal spermatogenesis and male fertility. Plays an important role in sperm flagellum biogenesis. This Rattus norvegicus (Rat) protein is Leucine-rich repeat-containing protein 46 (Lrrc46).